The sequence spans 124 residues: uncharacterized protein (124 aa).

The chain crosses the membrane as a helical span at residues 2 to 22 (AIIIAIIAAVIVIAALITFNV). The tract at residues 24–124 (NASPGPEKQE…ALLSMKNKKK (101 aa)) is disordered. Basic and acidic residues-rich tracts occupy residues 30-58 (EKQE…RAAE), 67-81 (DSPK…DDIY), and 89-113 (KHSD…RSYR).

Its subcellular location is the membrane. This is an uncharacterized protein from Bacillus subtilis (strain 168).